We begin with the raw amino-acid sequence, 420 residues long: Vitellogenin-3 (420 aa).

The first 19 residues, 1-19 (MMSLRICLLATCLLVAAHA), serve as a signal peptide directing secretion. Thr37 is subject to Phosphothreonine. Phosphoserine is present on residues Ser177 and Ser178. Tyr384 and Tyr390 each carry sulfotyrosine. Residues 401–420 (GQRSPAHKQAAYHGMHHAQN) are disordered.

It belongs to the AB hydrolase superfamily. Lipase family. Tyrosine sulfation occurs in the female only and plays an essential functional role. As to expression, synthesized in the fat body and ovarian follicle cells and accumulate in the oocyte.

The protein localises to the secreted. In terms of biological role, vitellogenin is the major yolk protein of eggs where it is used as a food source during embryogenesis. Vitellogenins and their receptor yl/yolkless are required for maintenance of microtubule plus-end orientation towards the posterior pole of oocytes. Involved in polarized localization of germ plasm components, such as osk mRNA and vas protein, to the oocyte posterior cortex. Receptor-mediated endocytosis by yl/yolkless is crucial for actin reorganization, mediated by osk isoform A/Long, required to anchor germ plasm components to the oocyte cortex. This is Vitellogenin-3 (Yp3) from Drosophila melanogaster (Fruit fly).